The following is an 83-amino-acid chain: Sec-independent protein translocase protein TatA (83 aa).

Residues 1-21 (MGSFSIWHWLIVLLIVVMVFG) form a helical membrane-spanning segment. The tract at residues 44–83 (KDGGQSAAATDDKPAAPAGQVTNAQASDKTTIDVEARQKS) is disordered. Over residues 63–72 (QVTNAQASDK) the composition is skewed to polar residues. Positions 73–83 (TTIDVEARQKS) are enriched in basic and acidic residues.

This sequence belongs to the TatA/E family. In terms of assembly, the Tat system comprises two distinct complexes: a TatABC complex, containing multiple copies of TatA, TatB and TatC subunits, and a separate TatA complex, containing only TatA subunits. Substrates initially bind to the TatABC complex, which probably triggers association of the separate TatA complex to form the active translocon.

The protein resides in the cell inner membrane. Part of the twin-arginine translocation (Tat) system that transports large folded proteins containing a characteristic twin-arginine motif in their signal peptide across membranes. TatA could form the protein-conducting channel of the Tat system. This is Sec-independent protein translocase protein TatA from Polaromonas sp. (strain JS666 / ATCC BAA-500).